The primary structure comprises 113 residues: Urease subunit beta (113 aa).

This sequence belongs to the urease beta subunit family. As to quaternary structure, heterotrimer of UreA (gamma), UreB (beta) and UreC (alpha) subunits. Three heterotrimers associate to form the active enzyme.

It is found in the cytoplasm. It carries out the reaction urea + 2 H2O + H(+) = hydrogencarbonate + 2 NH4(+). Its pathway is nitrogen metabolism; urea degradation; CO(2) and NH(3) from urea (urease route): step 1/1. The sequence is that of Urease subunit beta from Nitrosospira multiformis (strain ATCC 25196 / NCIMB 11849 / C 71).